The sequence spans 317 residues: Ribosomal RNA small subunit methyltransferase H (317 aa).

Residues Ala-37–His-39, Asp-56, Phe-85, Asp-106, and Gln-113 each bind S-adenosyl-L-methionine.

It belongs to the methyltransferase superfamily. RsmH family.

The protein resides in the cytoplasm. The enzyme catalyses cytidine(1402) in 16S rRNA + S-adenosyl-L-methionine = N(4)-methylcytidine(1402) in 16S rRNA + S-adenosyl-L-homocysteine + H(+). In terms of biological role, specifically methylates the N4 position of cytidine in position 1402 (C1402) of 16S rRNA. The polypeptide is Ribosomal RNA small subunit methyltransferase H (Lactococcus lactis subsp. lactis (strain IL1403) (Streptococcus lactis)).